The following is a 407-amino-acid chain: BRCA1-A complex subunit Abraxas 1 (407 aa).

An MPN domain is found at 7-155 (LGVLSGFVLG…THCLEHALYK (149 aa)). At Ser-48 the chain carries Phosphoserine. Residues 209-259 (LKEVHKINEMYAAVQEELKSICQKVEQSEREVEKLLMDVNQLKEVRRTQQA) adopt a coiled-coil conformation. The disordered stretch occupies residues 344–407 (KRKALDTHDQ…DADYPRSPTF (64 aa)). Over residues 347-366 (ALDTHDQGSVKRPRLLETES) the composition is skewed to basic and acidic residues. Residues Ser-384, Ser-385, Ser-394, and Ser-404 each carry the phosphoserine modification. Positions 388-399 (IDIEMGSPEDDA) are enriched in acidic residues. The short motif at 404–407 (SPTF) is the pSXXF motif element.

Belongs to the FAM175 family. Abraxas subfamily. As to quaternary structure, component of the ARISC complex, at least composed of UIMC1/RAP80, ABRAXAS1, BRCC3/BRCC36, BABAM2 and BABAM1/NBA1. Component of the BRCA1-A complex, at least composed of the BRCA1, BARD1, UIMC1/RAP80, ABRAXAS1, BRCC3/BRCC36, BABAM2 and BABAM1/NBA1. In the complex, interacts directly with UIMC1/RAP80, BRCC3/BRCC36 and BABAM2. Homodimer. Interacts directly (when phosphorylated at Ser-404) with BRCA1. The phosphorylated homodimer can interact directly with two BRCA1 chains, giving rise to a heterotetramer. Binds polyubiquitin. Phosphorylation of Ser-404 of the pSXXF motif by ATM or ATR constitutes a specific recognition motif for the BRCT domain of BRCA1.

Its subcellular location is the nucleus. Functionally, involved in DNA damage response and double-strand break (DSB) repair. Component of the BRCA1-A complex, acting as a central scaffold protein that assembles the various components of the complex and mediates the recruitment of BRCA1. The BRCA1-A complex specifically recognizes 'Lys-63'-linked ubiquitinated histones H2A and H2AX at DNA lesion sites, leading to target the BRCA1-BARD1 heterodimer to sites of DNA damage at DSBs. This complex also possesses deubiquitinase activity that specifically removes 'Lys-63'-linked ubiquitin on histones H2A and H2AX. This chain is BRCA1-A complex subunit Abraxas 1, found in Mus musculus (Mouse).